The chain runs to 278 residues: Ribosomal RNA small subunit methyltransferase A (278 aa).

Residues N18, L20, G45, E66, D89, and N110 each contribute to the S-adenosyl-L-methionine site.

It belongs to the class I-like SAM-binding methyltransferase superfamily. rRNA adenine N(6)-methyltransferase family. RsmA subfamily.

The protein localises to the cytoplasm. It carries out the reaction adenosine(1518)/adenosine(1519) in 16S rRNA + 4 S-adenosyl-L-methionine = N(6)-dimethyladenosine(1518)/N(6)-dimethyladenosine(1519) in 16S rRNA + 4 S-adenosyl-L-homocysteine + 4 H(+). Its function is as follows. Specifically dimethylates two adjacent adenosines (A1518 and A1519) in the loop of a conserved hairpin near the 3'-end of 16S rRNA in the 30S particle. May play a critical role in biogenesis of 30S subunits. The chain is Ribosomal RNA small subunit methyltransferase A from Cupriavidus metallidurans (strain ATCC 43123 / DSM 2839 / NBRC 102507 / CH34) (Ralstonia metallidurans).